Reading from the N-terminus, the 260-residue chain is MSFVHQKCRNIDTVYLGSNIHRLNVPDNLVKWSQEWSGYNPPAHTDPKVDGAVWADPEIDEKTFQPSWNAIDGKINRVSYVCQYSFDPVTLRPLNPIGRTGLSGRGLLGRWGPNHAADPIVSRTNDNGDLEFVAVQRHDNGEWAIPGGMVDAGEHVSQTLRREFAEEAMHGIVDSENLDELWNNGKELYRGYVDDPRNTDNAWMETVVFNFHDSKGLLKNVALQAGDDAKALRWIAVNSNEPLYASHSHFIDLLKESHSH.

The 145-residue stretch at 113-257 folds into the Nudix hydrolase domain; it reads PNHAADPIVS…SHFIDLLKES (145 aa). The Nudix box motif lies at 148-170; the sequence is GMVDAGEHVSQTLRREFAEEAMH. Glu-163 and Glu-167 together coordinate Mg(2+).

This sequence belongs to the Nudix hydrolase family. Mg(2+) is required as a cofactor. Mn(2+) serves as cofactor.

Its function is as follows. Probably mediates the hydrolysis of some nucleoside diphosphate derivatives. The sequence is that of Putative nudix hydrolase 6 (ndx-6) from Caenorhabditis elegans.